Consider the following 473-residue polypeptide: Photosystem II CP43 reaction center protein (473 aa).

Positions 1-14 are excised as a propeptide; sequence MKTLYSLRRFYPVE. T15 is subject to N-acetylthreonine. T15 is modified (phosphothreonine). A run of 5 helical transmembrane segments spans residues 69 to 93, 134 to 155, 178 to 200, 255 to 275, and 291 to 312; these read LFEV…PHLA, LLGP…KDRN, KALY…RKIT, KPFA…LSYS, and WFNN…ASQA. E367 is a binding site for [CaMn4O5] cluster. The chain crosses the membrane as a helical span at residues 447–471; the sequence is RARAAAAGFEKGIDRDFEPVLSMTP.

The protein belongs to the PsbB/PsbC family. PsbC subfamily. As to quaternary structure, PSII is composed of 1 copy each of membrane proteins PsbA, PsbB, PsbC, PsbD, PsbE, PsbF, PsbH, PsbI, PsbJ, PsbK, PsbL, PsbM, PsbT, PsbX, PsbY, PsbZ, Psb30/Ycf12, at least 3 peripheral proteins of the oxygen-evolving complex and a large number of cofactors. It forms dimeric complexes. Binds multiple chlorophylls and provides some of the ligands for the Ca-4Mn-5O cluster of the oxygen-evolving complex. It may also provide a ligand for a Cl- that is required for oxygen evolution. PSII binds additional chlorophylls, carotenoids and specific lipids. serves as cofactor.

Its subcellular location is the plastid. The protein localises to the chloroplast thylakoid membrane. One of the components of the core complex of photosystem II (PSII). It binds chlorophyll and helps catalyze the primary light-induced photochemical processes of PSII. PSII is a light-driven water:plastoquinone oxidoreductase, using light energy to abstract electrons from H(2)O, generating O(2) and a proton gradient subsequently used for ATP formation. In Liriodendron tulipifera (Tuliptree), this protein is Photosystem II CP43 reaction center protein.